Consider the following 685-residue polypeptide: MLRRFSKKNKNPEGGSDDASRKQKKLLSKFLEFITSSIWSIPIASFIESQSVVFDRQQMETDVYIMIHKEYSQLIDTLIECFCEDVGTTPTELVAAIQLFNQKDVSQQYKVALEPLLAAQNFNVFVPMMMRKNIELQLQALQMIEFMCGLIPSVLQLEDGETLRNMKKLSPEETERYVLISVLRHSKDEYDSMQKGSEELEMMAQNSRIQREALEQEIRKEEILLQQALDEGARAQNQNQNQGTSSTQTDGVNAPLRSVAAMMAATFAIDTATSTDDVTYKFLDQSTGTMTSSTGVSVGTLTNTGVSSGTMTSGVDTGTDADGTVGRPKSAKRVGSAVGKRSVSKGTPSEDAKKSSGSSSPDEAEKSKRERPGTSVKKAIGIVAANSEMSSNGTQMDVPVDEEGTKKRPGTTSKKSIATVTASPEMSSKTTQMEPEQDGEGKKRPETSKGANERKYSNAGLEDIVGPKSSPHEEKKSSHPSSRKGSKATDENAPATRPPSRKAAGGSHEPRAKTPNQKNKDERPTTRRSSVDKNAPKRNDSVPRERKSSVSHDESKPPKPIGPLRGNKYDGDVVLGRAESPGIDHGPRRKNLNDVNSHLVDTNRLNSSDVRVRAQYLREQRDKLLQMKNAERIKQMTDIQQNASLERPKTAARAREILDKDKKEAVAIRKEISDKLKTQILTLHH.

The segment at 1-20 (MLRRFSKKNKNPEGGSDDAS) is disordered. Positions 197–242 (SEELEMMAQNSRIQREALEQEIRKEEILLQQALDEGARAQNQNQNQ) form a coiled coil. The span at 287–310 (TGTMTSSTGVSVGTLTNTGVSSGT) shows a compositional bias: low complexity. The tract at residues 287–573 (TGTMTSSTGV…LRGNKYDGDV (287 aa)) is disordered. The span at 363-372 (EAEKSKRERP) shows a compositional bias: basic and acidic residues. The span at 410–434 (GTTSKKSIATVTASPEMSSKTTQME) shows a compositional bias: polar residues. 2 stretches are compositionally biased toward basic and acidic residues: residues 439 to 456 (GEGK…ERKY) and 508 to 557 (HEPR…ESKP).

It belongs to the CFAP36 family. Expressed in amphid and phasmid ciliated neurons.

Its subcellular location is the cell projection. It localises to the cilium. The protein localises to the cytoplasm. It is found in the cytoskeleton. The protein resides in the cilium axoneme. The chain is Cilia- and flagella-associated protein 36 from Caenorhabditis elegans.